The chain runs to 209 residues: Uracil phosphoribosyltransferase (209 aa).

5-phospho-alpha-D-ribose 1-diphosphate is bound by residues R79, R104, and 131–139; that span reads DPMLATGGS. Uracil contacts are provided by residues I194 and 199-201; that span reads GDA. Residue D200 coordinates 5-phospho-alpha-D-ribose 1-diphosphate.

This sequence belongs to the UPRTase family. Mg(2+) serves as cofactor.

The catalysed reaction is UMP + diphosphate = 5-phospho-alpha-D-ribose 1-diphosphate + uracil. It functions in the pathway pyrimidine metabolism; UMP biosynthesis via salvage pathway; UMP from uracil: step 1/1. Its activity is regulated as follows. Allosterically activated by GTP. Its function is as follows. Catalyzes the conversion of uracil and 5-phospho-alpha-D-ribose 1-diphosphate (PRPP) to UMP and diphosphate. This is Uracil phosphoribosyltransferase from Alkaliphilus metalliredigens (strain QYMF).